Consider the following 154-residue polypeptide: Zinc finger HIT domain-containing protein 1 (154 aa).

The disordered stretch occupies residues 1–73 (MVEKKPAVRS…TGKKKKKTRG (73 aa)). The span at 14 to 23 (GQRRVLDRAA) shows a compositional bias: basic and acidic residues. A coiled-coil region spans residues 23–39 (ARQRRINRQLEALENDN). The Nuclear localization signal motif lies at 38-47 (DNFQDDPHAG). The interval 72-110 (RGDHFKLRFRKNFQALLEEQNLSASEGPNYLTACAGPPS) is interaction with NR1D2. Thr-103 carries the post-translational modification Phosphothreonine; by MAPK11 and MAPK14. Residues Cys-117, Cys-120, Cys-128, Cys-131, Cys-136, Cys-140, His-144, and Cys-149 each coordinate Zn(2+). The segment at 117 to 149 (CAVCGFPSPYTCVSCGARYCTVRCLGTHQETRC) adopts an HIT-type zinc-finger fold.

The protein belongs to the ZNHIT1 family. In terms of assembly, component of the chromatin-remodeling SRCAP complex composed of at least SRCAP, DMAP1, RUVBL1, RUVBL2, ACTL6A, YEATS4, ACTR6 and ZNHIT1. Interacts with MAPK11 and MAPK14. Interacts with NR1D1 and NR2D2. Interacts (via HIT-type zinc finger) with the RUVBL1/RUVBL2 complex in the presence of ADP. Interacts with histone deacetylase HDAC1. Interacts with histone H2AZ1; the interaction results in recruitment of H2AZ1 to the MYOG promoter region. Interacts with PCID2; the interaction results in inhibition of SRCAP complex activity, preventing the deposition of histone variant H2AZ1 to lymphoid fate regulator genes and restricting lymphoid lineage commitment. Post-translationally, phosphorylated on Thr by MAPK11 or MAPK14. Phosphorylation is required for MYOG induction, for deposition of histone H2AZ1 at the MYOG promoter and for SRCAP complex integrity. In terms of tissue distribution, higher expression in testis than in other tissues (at protein level). Expressed in the lens (at protein level). In the intestinal epithelium, expression is enriched at the bottom of crypts. In hematopoietic cells, enriched in hematopoietic stem cells and progenitors with significantly reduced expression in differentiated cells such as granulocytes, monocytes, T cells and B cells.

The protein resides in the nucleus. Plays a role in chromatin remodeling by promoting the incorporation of histone variant H2AZ1/H2A.Z into the genome to regulate gene expression. Promotes SRCAP complex-mediated deposition of histone variant H2AZ1 to lymphoid fate regulator genes, enhancing lymphoid lineage commitment. Recruited to the promoter of the transcriptional activator MYOG at the early stages of muscle differentiation where it mediates binding of histone variant H2AZ1 to chromatin and induces muscle-specific gene expression. Maintains hematopoietic stem cell (HSC) quiescence by determining the chromatin accessibility at distal enhancers of HSC quiescence genes such as PTEN, FSTL1 and KLF4, enhancing deposition of H2AZ1 to promote their sustained transcription and restricting PI3K-AKT signaling inhibition. Plays a role in intestinal stem cell maintenance by promoting H2AZ1 deposition at the transcription start sites of genes involved in intestinal stem cell fate determination including LGR5, TGFB1 and TGFBR2, thereby contributing to gene transcription. Promotes phosphorylation of the H2AZ1 chaperone VPS72/YL1 which enhances the interaction between HZAZ1 and VPS72. Regulates the entry of male germ cells into meiosis by controlling histone H2AZ1 deposition which facilitates the expression of meiotic genes such as MEIOSIN, leading to the initiation of meiosis. Required for postnatal heart function through its role in maintenance of cardiac Ca(2+) homeostasis by modulating the expression of Ca(2+)-regulating proteins CASQ1 and ATP2A2/SERCA2A via deposition of histone H2AZ1 at their promoters. During embryonic heart development, required for mitochondrial maturation and oxidative metabolism by functioning through H2AZ1 deposition to activate transcription of metabolic genes and is also required to maintain the stability of the respiratory complex. In neural cells, increases deposition of the H2AZ1 histone variant and promotes neurite growth. Plays a role in TP53/p53-mediated apoptosis induction by stimulating the transcriptional activation of several proapoptotic p53 target genes such as PMAIP1/NOXA and BBC3/PUMA. Mediates cell cycle arrest induced in response to gamma-irradiation by enhancing recruitment of TP53/p53 to the promoter of the cell cycle inhibitor CDKN1A, leading to its transcriptional activation. Recruited to the promoter of cyclin-dependent kinase CDK6 and inhibits its transcription, possibly by decreasing the acetylation level of histone H4, leading to cell cycle arrest at the G1 phase. Plays a role in lens fiber cell differentiation by regulating the expression of cell cycle regulator CDKN1A/p21Cip1. Binds to transcriptional repressor NR1D2 and relieves it of its inhibitory effect on the transcription of apolipoprotein APOC3 without affecting its DNA-binding activity. The protein is Zinc finger HIT domain-containing protein 1 (Znhit1) of Mus musculus (Mouse).